A 291-amino-acid chain; its full sequence is Protease HtpX (291 aa).

2 helical membrane-spanning segments follow: residues 4–24 (IALF…VLNI) and 36–56 (LSGL…VSLL). H143 provides a ligand contact to Zn(2+). Residue E144 is part of the active site. H147 is a binding site for Zn(2+). A run of 2 helical transmembrane segments spans residues 151-171 (GDMI…IFLS) and 199-219 (FIVS…LTMW). E225 provides a ligand contact to Zn(2+).

Belongs to the peptidase M48B family. The cofactor is Zn(2+).

It is found in the cell inner membrane. This is Protease HtpX from Aliivibrio salmonicida (strain LFI1238) (Vibrio salmonicida (strain LFI1238)).